The chain runs to 645 residues: DNA mismatch repair protein MutL (645 aa).

2 disordered regions span residues 353–381 (RPEN…FGPQ) and 395–420 (QGEP…PTTG).

Belongs to the DNA mismatch repair MutL/HexB family.

This protein is involved in the repair of mismatches in DNA. It is required for dam-dependent methyl-directed DNA mismatch repair. May act as a 'molecular matchmaker', a protein that promotes the formation of a stable complex between two or more DNA-binding proteins in an ATP-dependent manner without itself being part of a final effector complex. The polypeptide is DNA mismatch repair protein MutL (Pseudomonas syringae pv. tomato (strain ATCC BAA-871 / DC3000)).